A 417-amino-acid polypeptide reads, in one-letter code: Putative nickel insertion protein (417 aa).

The tract at residues 69-99 (HEHHHDHGHHHHGHGHHHDHTHDHHHHHEHR) is disordered. Over residues 74 to 99 (DHGHHHHGHGHHHDHTHDHHHHHEHR) the composition is skewed to basic residues.

The protein belongs to the LarC family.

This chain is Putative nickel insertion protein, found in Maridesulfovibrio salexigens (strain ATCC 14822 / DSM 2638 / NCIMB 8403 / VKM B-1763) (Desulfovibrio salexigens).